The sequence spans 99 residues: UPF0213 protein RBAM_000440 (99 aa).

The 76-residue stretch at 4–79 (NSHFFYVLLC…KQLTRKKKEQ (76 aa)) folds into the GIY-YIG domain.

This sequence belongs to the UPF0213 family.

This is UPF0213 protein RBAM_000440 from Bacillus velezensis (strain DSM 23117 / BGSC 10A6 / LMG 26770 / FZB42) (Bacillus amyloliquefaciens subsp. plantarum).